The primary structure comprises 199 residues: Ribonuclease P protein component 3 (199 aa).

The protein belongs to the eukaryotic/archaeal RNase P protein component 3 family. In terms of assembly, consists of a catalytic RNA component and at least 4-5 protein subunits.

It localises to the cytoplasm. The enzyme catalyses Endonucleolytic cleavage of RNA, removing 5'-extranucleotides from tRNA precursor.. Its function is as follows. Part of ribonuclease P, a protein complex that generates mature tRNA molecules by cleaving their 5'-ends. The polypeptide is Ribonuclease P protein component 3 (Archaeoglobus fulgidus (strain ATCC 49558 / DSM 4304 / JCM 9628 / NBRC 100126 / VC-16)).